A 458-amino-acid chain; its full sequence is GTPase Der (458 aa).

EngA-type G domains are found at residues 4–169 and 178–353; these read PSIA…PKDL and IMMS…TQHR. Residues 10 to 17, 57 to 61, 120 to 123, 184 to 191, 231 to 235, and 296 to 299 contribute to the GTP site; these read GRPNVGKS, DTGGL, NKCE, DTAGI, and NKWD. Positions 354-439 constitute a KH-like domain; that stretch reads RRVTTSVVNE…PIILLWRGKQ (86 aa).

This sequence belongs to the TRAFAC class TrmE-Era-EngA-EngB-Septin-like GTPase superfamily. EngA (Der) GTPase family. In terms of assembly, associates with the 50S ribosomal subunit.

In terms of biological role, GTPase that plays an essential role in the late steps of ribosome biogenesis. This Prochlorococcus marinus subsp. pastoris (strain CCMP1986 / NIES-2087 / MED4) protein is GTPase Der.